The primary structure comprises 381 residues: Flap endonuclease 1 (381 aa).

The interval 1 to 105 is N-domain; it reads MGIKNLATLI…YELDKRKVRR (105 aa). Asp-34 is a binding site for Mg(2+). Residues Arg-47 and Arg-71 each contribute to the DNA site. Residues Asp-87, Glu-156, Glu-158, Asp-177, and Asp-179 each contribute to the Mg(2+) site. Residues 120–251 form an I-domain region; that stretch reads EIIKHERRLV…VNALKLIKEH (132 aa). Glu-156 contributes to the DNA binding site. 2 residues coordinate DNA: Gly-229 and Asp-231. Residue Asp-231 coordinates Mg(2+). Residues 339–347 are interaction with PCNA; that stretch reads VQKRLDSFF. Residues 360–381 form a disordered region; sequence AAKKAKDAKKKAAAKGKIAKRR. A compositionally biased stretch (basic residues) spans 365–381; the sequence is KDAKKKAAAKGKIAKRR.

This sequence belongs to the XPG/RAD2 endonuclease family. FEN1 subfamily. Interacts with PCNA. Three molecules of FEN1 bind to one PCNA trimer with each molecule binding to one PCNA monomer. PCNA stimulates the nuclease activity without altering cleavage specificity. The cofactor is Mg(2+). Post-translationally, phosphorylated. Phosphorylation upon DNA damage induces relocalization to the nuclear plasma.

It localises to the nucleus. The protein resides in the nucleolus. The protein localises to the nucleoplasm. Its subcellular location is the mitochondrion. Functionally, structure-specific nuclease with 5'-flap endonuclease and 5'-3' exonuclease activities involved in DNA replication and repair. During DNA replication, cleaves the 5'-overhanging flap structure that is generated by displacement synthesis when DNA polymerase encounters the 5'-end of a downstream Okazaki fragment. It enters the flap from the 5'-end and then tracks to cleave the flap base, leaving a nick for ligation. Also involved in the long patch base excision repair (LP-BER) pathway, by cleaving within the apurinic/apyrimidinic (AP) site-terminated flap. Acts as a genome stabilization factor that prevents flaps from equilibrating into structures that lead to duplications and deletions. Also possesses 5'-3' exonuclease activity on nicked or gapped double-stranded DNA, and exhibits RNase H activity. Also involved in replication and repair of rDNA and in repairing mitochondrial DNA. The sequence is that of Flap endonuclease 1 from Kluyveromyces lactis (strain ATCC 8585 / CBS 2359 / DSM 70799 / NBRC 1267 / NRRL Y-1140 / WM37) (Yeast).